The primary structure comprises 381 residues: MATHLFTSESVSEGHPDKIADQISDAVLDAILEQDPRARVACETYVKTGMVLVGGEVTTSAWVDIEELTRNTVKEIGYTHSDMGFDADSCAVLNAIGKQSPDINQGVDRASLEEQGAGDQGLMFGYASDETDVLMPAPITYSHRLVQKQAEVRKSGKLDWLRPDAKSQITFKYENDKPVGIDAVVLSTQHCDSVSTETVREAVMEEIIKPVLPSEWIDGNTRFHINPTGRFVIGGPMGDCGLTGRKIIVDTYGGMARHGGGAFSGKDPSKVDRSAAYAGRYVAKNIVAAGLAKRCEIQVSYAIGVAEPTSISIDTFGTGVVDEKTLVALVREHFDLRPYGLIQMLDLERPIYRPTAAYGHFGRDEFPWEATDKAQALKASL.

Position 15 (histidine 15) interacts with ATP. Aspartate 17 contributes to the Mg(2+) binding site. Glutamate 43 is a K(+) binding site. L-methionine is bound by residues glutamate 56 and glutamine 99. The tract at residues 99-109 is flexible loop; that stretch reads QSPDINQGVDR. Residues 164 to 166, 230 to 231, aspartate 239, 245 to 246, alanine 262, and lysine 266 contribute to the ATP site; these read DAK, RF, and RK. Position 239 (aspartate 239) interacts with L-methionine. Lysine 270 contacts L-methionine.

It belongs to the AdoMet synthase family. Homotetramer; dimer of dimers. Mg(2+) is required as a cofactor. It depends on K(+) as a cofactor.

Its subcellular location is the cytoplasm. It catalyses the reaction L-methionine + ATP + H2O = S-adenosyl-L-methionine + phosphate + diphosphate. It participates in amino-acid biosynthesis; S-adenosyl-L-methionine biosynthesis; S-adenosyl-L-methionine from L-methionine: step 1/1. Its function is as follows. Catalyzes the formation of S-adenosylmethionine (AdoMet) from methionine and ATP. The overall synthetic reaction is composed of two sequential steps, AdoMet formation and the subsequent tripolyphosphate hydrolysis which occurs prior to release of AdoMet from the enzyme. This Alteromonas mediterranea (strain DSM 17117 / CIP 110805 / LMG 28347 / Deep ecotype) protein is S-adenosylmethionine synthase.